Consider the following 204-residue polypeptide: Glycerol-3-phosphate acyltransferase (204 aa).

Helical transmembrane passes span 8-28 (ILIF…CYIF), 53-73 (VLAA…VVIA), 81-101 (FITA…IFFG), 116-136 (FGFS…VAII), and 155-175 (VIFT…IIIL).

The protein belongs to the PlsY family. In terms of assembly, probably interacts with PlsX.

It localises to the cell inner membrane. The enzyme catalyses an acyl phosphate + sn-glycerol 3-phosphate = a 1-acyl-sn-glycero-3-phosphate + phosphate. The protein operates within lipid metabolism; phospholipid metabolism. Its function is as follows. Catalyzes the transfer of an acyl group from acyl-phosphate (acyl-PO(4)) to glycerol-3-phosphate (G3P) to form lysophosphatidic acid (LPA). This enzyme utilizes acyl-phosphate as fatty acyl donor, but not acyl-CoA or acyl-ACP. The chain is Glycerol-3-phosphate acyltransferase from Francisella tularensis subsp. holarctica (strain OSU18).